The following is a 238-amino-acid chain: DNA repair protein RecO (238 aa).

It belongs to the RecO family.

Functionally, involved in DNA repair and RecF pathway recombination. The chain is DNA repair protein RecO from Aliivibrio salmonicida (strain LFI1238) (Vibrio salmonicida (strain LFI1238)).